The primary structure comprises 329 residues: Calponin-3 (329 aa).

N6-acetyllysine is present on lysine 23. A Calponin-homology (CH) domain is found at 26–130 (HQAEEDLRNW…TLVALAGLAK (105 aa)). Lysine 158 bears the N6-methyllysine mark. Calponin-like repeat units follow at residues 164–189 (IGLQ…RHLY), 204–229 (ISLQ…RDIY), and 243–268 (ISLQ…RQVY). The interval 280–329 (VIHNGSQGTGTNGSEISDSDYQAEYPDEYHGEYQDDYPRDYQYGDQGIDY) is disordered. Residues 306 to 318 (DEYHGEYQDDYPR) are compositionally biased toward basic and acidic residues.

This sequence belongs to the calponin family.

Functionally, thin filament-associated protein that is implicated in the regulation and modulation of smooth muscle contraction. It is capable of binding to actin, calmodulin and tropomyosin. The interaction of calponin with actin inhibits the actomyosin Mg-ATPase activity. This chain is Calponin-3 (CNN3), found in Bos taurus (Bovine).